We begin with the raw amino-acid sequence, 282 residues long: Pyridoxal 5'-phosphate synthase subunit PdxS (282 aa).

Residue Asp14 coordinates D-ribose 5-phosphate. Catalysis depends on Lys71, which acts as the Schiff-base intermediate with D-ribose 5-phosphate. Gly143 is a D-ribose 5-phosphate binding site. Arg155 lines the D-glyceraldehyde 3-phosphate pocket. Residues Gly204 and 225–226 (GS) contribute to the D-ribose 5-phosphate site.

Belongs to the PdxS/SNZ family. In the presence of PdxT, forms a dodecamer of heterodimers.

It catalyses the reaction aldehydo-D-ribose 5-phosphate + D-glyceraldehyde 3-phosphate + L-glutamine = pyridoxal 5'-phosphate + L-glutamate + phosphate + 3 H2O + H(+). The protein operates within cofactor biosynthesis; pyridoxal 5'-phosphate biosynthesis. Its function is as follows. Catalyzes the formation of pyridoxal 5'-phosphate from ribose 5-phosphate (RBP), glyceraldehyde 3-phosphate (G3P) and ammonia. The ammonia is provided by the PdxT subunit. Can also use ribulose 5-phosphate and dihydroxyacetone phosphate as substrates, resulting from enzyme-catalyzed isomerization of RBP and G3P, respectively. The sequence is that of Pyridoxal 5'-phosphate synthase subunit PdxS from Treponema denticola (strain ATCC 35405 / DSM 14222 / CIP 103919 / JCM 8153 / KCTC 15104).